The primary structure comprises 25 residues: Chlorocatechol 1,2-dioxygenase 1 (25 aa).

Belongs to the intradiol ring-cleavage dioxygenase family. Requires Fe(3+) as cofactor.

The catalysed reaction is 3,5-dichlorocatechol + O2 = (2E,4E)-2,4-dichloromuconate + 2 H(+). It participates in xenobiotic degradation; 2-(2,4-dichlorophenoxy)propanoate degradation. In Delftia acidovorans (Pseudomonas acidovorans), this protein is Chlorocatechol 1,2-dioxygenase 1 (tfdC).